A 438-amino-acid polypeptide reads, in one-letter code: Glutamyl-tRNA(Gln) amidotransferase subunit D (438 aa).

Positions 92–422 (PDVTIIGTGG…EEVRRMMLTN (331 aa)) constitute an Asparaginase/glutaminase domain. Active-site residues include Thr-102, Thr-178, Asp-179, and Lys-256.

This sequence belongs to the asparaginase 1 family. GatD subfamily. As to quaternary structure, heterodimer of GatD and GatE.

The enzyme catalyses L-glutamyl-tRNA(Gln) + L-glutamine + ATP + H2O = L-glutaminyl-tRNA(Gln) + L-glutamate + ADP + phosphate + H(+). Functionally, allows the formation of correctly charged Gln-tRNA(Gln) through the transamidation of misacylated Glu-tRNA(Gln) in organisms which lack glutaminyl-tRNA synthetase. The reaction takes place in the presence of glutamine and ATP through an activated gamma-phospho-Glu-tRNA(Gln). The GatDE system is specific for glutamate and does not act on aspartate. In Pyrococcus horikoshii (strain ATCC 700860 / DSM 12428 / JCM 9974 / NBRC 100139 / OT-3), this protein is Glutamyl-tRNA(Gln) amidotransferase subunit D.